The primary structure comprises 99 residues: Protein Tat (99 aa).

A disordered region spans residues 1–20; sequence MEPVDPNIEPWNQPGSQPKT. Residues 1-24 form an interaction with human CREBBP region; sequence MEPVDPNIEPWNQPGSQPKTACNQ. Residues 1–48 form a transactivation region; that stretch reads MEPVDPNIEPWNQPGSQPKTACNQCYCKKCCYHCQLCFLQKGLGICYG. Residues Cys22, Cys25, and Cys27 each contribute to the Zn(2+) site. The tract at residues 22 to 37 is cysteine-rich; sequence CNQCYCKKCCYHCQLC. The residue at position 28 (Lys28) is an N6-acetyllysine; by host PCAF. Zn(2+)-binding residues include Cys30, His33, Cys34, and Cys37. The tract at residues 38–48 is core; it reads FLQKGLGICYG. The short motif at 49 to 57 is the Nuclear localization signal, RNA-binding (TAR), and protein transduction element; that stretch reads REKRRQRTT. Residues 49–86 are interaction with the host capping enzyme RNGTT; it reads REKRRQRTTTPYASKNHKDPIPKQPLPQARGDPTGPKE. At Lys51 the chain carries N6-acetyllysine; by host EP300 and GCN5L2. An asymmetric dimethylarginine; by host PRMT6 mark is found at Arg52 and Arg53. A disordered region spans residues 54–99; it reads QRTTTPYASKNHKDPIPKQPLPQARGDPTGPKESKKEVESKTKTDP. A Glycyl lysine isopeptide (Lys-Gly) (interchain with G-Cter in ubiquitin) cross-link involves residue Lys71. The short motif at 78-80 is the Cell attachment site element; the sequence is RGD. Over residues 83-99 the composition is skewed to basic and acidic residues; that stretch reads GPKESKKEVESKTKTDP.

Belongs to the lentiviruses Tat family. As to quaternary structure, interacts with host CCNT1. Associates with the P-TEFb complex composed at least of Tat, P-TEFb (CDK9 and CCNT1), TAR RNA, RNA Pol II. Recruits the HATs CREBBP, TAF1/TFIID, EP300, PCAF and GCN5L2. Interacts with host KAT5/Tip60; this interaction targets the latter to degradation. Interacts with the host deacetylase SIRT1. Interacts with host capping enzyme RNGTT; this interaction stimulates RNGTT. Binds to host KDR, and to the host integrins ITGAV/ITGB3 and ITGA5/ITGB1. Interacts with host KPNB1/importin beta-1 without previous binding to KPNA1/importin alpha-1. Interacts with EIF2AK2. Interacts with host nucleosome assembly protein NAP1L1; this interaction may be required for the transport of Tat within the nucleus, since the two proteins interact at the nuclear rim. Interacts with host C1QBP/SF2P32; this interaction involves lysine-acetylated Tat. Interacts with the host chemokine receptors CCR2, CCR3 and CXCR4. Interacts with host DPP4/CD26; this interaction may trigger an anti-proliferative effect. Interacts with host LDLR. Interacts with the host extracellular matrix metalloproteinase MMP1. Interacts with host PRMT6; this interaction mediates Tat's methylation. Interacts with, and is ubiquitinated by MDM2/Hdm2. Interacts with host PSMC3 and HTATIP2. Interacts with STAB1; this interaction may overcome SATB1-mediated repression of IL2 and IL2RA (interleukin) in T cells by binding to the same domain than HDAC1. Interacts (when acetylated) with human CDK13, thereby increasing HIV-1 mRNA splicing and promoting the production of the doubly spliced HIV-1 protein Nef. Interacts with host TBP; this interaction modulates the activity of transcriptional pre-initiation complex. Interacts with host RELA. Interacts with host PLSCR1; this interaction negatively regulates Tat transactivation activity by altering its subcellular distribution. Asymmetrical arginine methylation by host PRMT6 seems to diminish the transactivation capacity of Tat and affects the interaction with host CCNT1. Post-translationally, acetylation by EP300, CREBBP, GCN5L2/GCN5 and PCAF regulates the transactivation activity of Tat. EP300-mediated acetylation of Lys-50 promotes dissociation of Tat from the TAR RNA through the competitive binding to PCAF's bromodomain. In addition, the non-acetylated Tat's N-terminus can also interact with PCAF. PCAF-mediated acetylation of Lys-28 enhances Tat's binding to CCNT1. Lys-50 is deacetylated by SIRT1. In terms of processing, polyubiquitination by host MDM2 does not target Tat to degradation, but activates its transactivation function and fosters interaction with CCNT1 and TAR RNA. Phosphorylated by EIF2AK2 on serine and threonine residues adjacent to the basic region important for TAR RNA binding and function. Phosphorylation of Tat by EIF2AK2 is dependent on the prior activation of EIF2AK2 by dsRNA.

It is found in the host nucleus. Its subcellular location is the host nucleolus. The protein localises to the host cytoplasm. It localises to the secreted. Its function is as follows. Transcriptional activator that increases RNA Pol II processivity, thereby increasing the level of full-length viral transcripts. Recognizes a hairpin structure at the 5'-LTR of the nascent viral mRNAs referred to as the transactivation responsive RNA element (TAR) and recruits the cyclin T1-CDK9 complex (P-TEFb complex) that will in turn hyperphosphorylate the RNA polymerase II to allow efficient elongation. The CDK9 component of P-TEFb and other Tat-activated kinases hyperphosphorylate the C-terminus of RNA Pol II that becomes stabilized and much more processive. Other factors such as HTATSF1/Tat-SF1, SUPT5H/SPT5, and HTATIP2 are also important for Tat's function. Besides its effect on RNA Pol II processivity, Tat induces chromatin remodeling of proviral genes by recruiting the histone acetyltransferases (HATs) CREBBP, EP300 and PCAF to the chromatin. This also contributes to the increase in proviral transcription rate, especially when the provirus integrates in transcriptionally silent region of the host genome. To ensure maximal activation of the LTR, Tat mediates nuclear translocation of NF-kappa-B by interacting with host RELA. Through its interaction with host TBP, Tat may also modulate transcription initiation. Tat can reactivate a latently infected cell by penetrating in it and transactivating its LTR promoter. In the cytoplasm, Tat is thought to act as a translational activator of HIV-1 mRNAs. Extracellular circulating Tat can be endocytosed by surrounding uninfected cells via the binding to several surface receptors such as CD26, CXCR4, heparan sulfate proteoglycans (HSPG) or LDLR. Neurons are rarely infected, but they internalize Tat via their LDLR. Through its interaction with nuclear HATs, Tat is potentially able to control the acetylation-dependent cellular gene expression. Modulates the expression of many cellular genes involved in cell survival, proliferation or in coding for cytokines or cytokine receptors. Tat plays a role in T-cell and neurons apoptosis. Tat induced neurotoxicity and apoptosis probably contribute to neuroAIDS. Circulating Tat also acts as a chemokine-like and/or growth factor-like molecule that binds to specific receptors on the surface of the cells, affecting many cellular pathways. In the vascular system, Tat binds to ITGAV/ITGB3 and ITGA5/ITGB1 integrins dimers at the surface of endothelial cells and competes with bFGF for heparin-binding sites, leading to an excess of soluble bFGF. The polypeptide is Protein Tat (Homo sapiens (Human)).